A 207-amino-acid polypeptide reads, in one-letter code: Urease accessory protein UreG (207 aa).

GTP is bound at residue 16–23; it reads GPVGSGKT.

Belongs to the SIMIBI class G3E GTPase family. UreG subfamily. As to quaternary structure, homodimer. UreD, UreF and UreG form a complex that acts as a GTP-hydrolysis-dependent molecular chaperone, activating the urease apoprotein by helping to assemble the nickel containing metallocenter of UreC. The UreE protein probably delivers the nickel.

The protein resides in the cytoplasm. In terms of biological role, facilitates the functional incorporation of the urease nickel metallocenter. This process requires GTP hydrolysis, probably effectuated by UreG. This chain is Urease accessory protein UreG, found in Blochmanniella pennsylvanica (strain BPEN).